The sequence spans 140 residues: ATP synthase epsilon chain 1 (140 aa).

The protein belongs to the ATPase epsilon chain family. In terms of assembly, F-type ATPases have 2 components, CF(1) - the catalytic core - and CF(0) - the membrane proton channel. CF(1) has five subunits: alpha(3), beta(3), gamma(1), delta(1), epsilon(1). CF(0) has three main subunits: a, b and c.

It is found in the cell inner membrane. Functionally, produces ATP from ADP in the presence of a proton gradient across the membrane. This chain is ATP synthase epsilon chain 1, found in Methylococcus capsulatus (strain ATCC 33009 / NCIMB 11132 / Bath).